We begin with the raw amino-acid sequence, 202 residues long: Putative zinc finger protein ZK686.5 (202 aa).

Residues 43-63 (RKNVDNTSTRKPYSYKDRKRK) are disordered. C2H2-type zinc fingers lie at residues 110–133 (TYCE…GKVH), 138–160 (IECH…MKTH), and 169–192 (VQCE…DVSH).

The protein localises to the nucleus. The protein is Putative zinc finger protein ZK686.5 of Caenorhabditis elegans.